Reading from the N-terminus, the 152-residue chain is Small ribosomal subunit protein uS15 (152 aa).

Over residues 1–10 (MARMYARRRG) the composition is skewed to basic residues. The interval 1 to 24 (MARMYARRRGTSSSVRPYRKEAPE) is disordered.

Belongs to the universal ribosomal protein uS15 family. Part of the 30S ribosomal subunit.

The protein is Small ribosomal subunit protein uS15 of Methanoculleus marisnigri (strain ATCC 35101 / DSM 1498 / JR1).